A 444-amino-acid chain; its full sequence is UDP-N-acetylmuramate--L-alanine ligase (444 aa).

Residue 110–116 (GAHGKTS) coordinates ATP.

This sequence belongs to the MurCDEF family.

Its subcellular location is the cytoplasm. The enzyme catalyses UDP-N-acetyl-alpha-D-muramate + L-alanine + ATP = UDP-N-acetyl-alpha-D-muramoyl-L-alanine + ADP + phosphate + H(+). It participates in cell wall biogenesis; peptidoglycan biosynthesis. In terms of biological role, cell wall formation. The polypeptide is UDP-N-acetylmuramate--L-alanine ligase (Streptococcus pneumoniae (strain ATCC 700669 / Spain 23F-1)).